The chain runs to 901 residues: MLIPSKLSRPVRLDHTVVRERLLAKLSGANNFRLLLVTSPAGYGKTTLVSQWAAGKNELGWYSLDEGDNQQERFASYLIAAIQQATGGHCSTSEAMAQKRQYASLTSLFAQLFIELAQWHRPLYLVIDDYHLITNPVIHDAMRFFLRHQPENFTLVVLSRNLPQLGIANLRVRDQLLEIGSQQLAFNHQEAKQFFDRRLSSPIEAAESSRMCDDVAGWATALQLIALSARQNHTSAHHSARRLAGINASHLSDYLVDEVLDNVDVSTRHFLLKSAILRSMNDALIVRVTGEENGQMRLEEIERQGLFLQRMDDTGEWFSYHPLFGSFLRQRCQWELAAELPEIHRAAAESWMEQGFPSEAIHHALAAGDAQMLRDILLNHAWGLFNHSELALLEESLKALPWESLLENPRLVLLQAWLMQSQHRYSEVNTLLARAEQEIKGVMDGTLHAEFNALRAQVAINDGNPEEAERLAKLALDELPLAWFYSRIVATSVHGEVLHCKGNLSQSLSLMQQTEQMARHHDVWHYALWSLIQQSEIQFAQGFLQAAWETQERAFQLIKEQHLEQLPMHEFLVRIRAQLLWAWARLDEAEASARSGIAVLSTFQPQQQLQCLTLLVQCSLARGDLDNARSQLNRLEKLLGNGRYHCDWISNADKVRVIYWQLTGDKKSAANWLRHTPKPAFANNHFLQGQWRNIARAQILLGEFEPAEIVLEELNENARSLRLMSDLNRNLLLLNQLYWQSGRKNDAQRVLLDALQLANRTGFISHFVIEGEAMAQQLRQLIQLNTLPEMEQHRAQRILRYINQHHRHKFAHFDEGFVERLLNHPDVPELIRTSPLTQREWQVLGLIYSGYSNEQIAGELAVAATTIKTHIRNLYQKLGVAHRQDAVQHAQQLLKMMGYGV.

ATP is bound at residue 39-46 (SPAGYGKT). In terms of domain architecture, HTH luxR-type spans 829 to 894 (ELIRTSPLTQ…DAVQHAQQLL (66 aa)). Positions 853 to 872 (NEQIAGELAVAATTIKTHIR) form a DNA-binding region, H-T-H motif.

Belongs to the MalT family. Monomer in solution. Oligomerizes to an active state in the presence of the positive effectors ATP and maltotriose.

Activated by ATP and maltotriose, which are both required for DNA binding. Its function is as follows. Positively regulates the transcription of the maltose regulon whose gene products are responsible for uptake and catabolism of malto-oligosaccharides. Specifically binds to the promoter region of its target genes, recognizing a short DNA motif called the MalT box. The polypeptide is HTH-type transcriptional regulator MalT (Salmonella typhi).